A 142-amino-acid chain; its full sequence is Hemoglobin subunit alpha-2 (142 aa).

A Globin domain is found at V2 to R142. O2 is bound at residue H59. H88 provides a ligand contact to heme b.

It belongs to the globin family. Heterotetramer of two alpha chains and two beta chains. In terms of tissue distribution, red blood cells.

Functionally, involved in oxygen transport from the lung to the various peripheral tissues. This Bubalus bubalis (Domestic water buffalo) protein is Hemoglobin subunit alpha-2.